The following is a 343-amino-acid chain: Aspartate carbamoyltransferase catalytic subunit (343 aa).

Arg91 and Thr92 together coordinate carbamoyl phosphate. L-aspartate is bound at residue Lys119. Carbamoyl phosphate-binding residues include Arg141, His171, and Gln174. Residues Arg204 and Arg259 each contribute to the L-aspartate site. 2 residues coordinate carbamoyl phosphate: Gly300 and Pro301.

The protein belongs to the aspartate/ornithine carbamoyltransferase superfamily. ATCase family. Heterododecamer (2C3:3R2) of six catalytic PyrB chains organized as two trimers (C3), and six regulatory PyrI chains organized as three dimers (R2).

It carries out the reaction carbamoyl phosphate + L-aspartate = N-carbamoyl-L-aspartate + phosphate + H(+). It participates in pyrimidine metabolism; UMP biosynthesis via de novo pathway; (S)-dihydroorotate from bicarbonate: step 2/3. In terms of biological role, catalyzes the condensation of carbamoyl phosphate and aspartate to form carbamoyl aspartate and inorganic phosphate, the committed step in the de novo pyrimidine nucleotide biosynthesis pathway. This Burkholderia vietnamiensis (strain G4 / LMG 22486) (Burkholderia cepacia (strain R1808)) protein is Aspartate carbamoyltransferase catalytic subunit.